The chain runs to 311 residues: Methionyl-tRNA formyltransferase (311 aa).

Residue 112 to 115 (SLLP) participates in (6S)-5,6,7,8-tetrahydrofolate binding.

Belongs to the Fmt family.

The enzyme catalyses L-methionyl-tRNA(fMet) + (6R)-10-formyltetrahydrofolate = N-formyl-L-methionyl-tRNA(fMet) + (6S)-5,6,7,8-tetrahydrofolate + H(+). Attaches a formyl group to the free amino group of methionyl-tRNA(fMet). The formyl group appears to play a dual role in the initiator identity of N-formylmethionyl-tRNA by promoting its recognition by IF2 and preventing the misappropriation of this tRNA by the elongation apparatus. This chain is Methionyl-tRNA formyltransferase, found in Bradyrhizobium sp. (strain ORS 278).